The chain runs to 164 residues: Endoribonuclease YbeY (164 aa).

The Zn(2+) site is built by His-114, His-118, and His-124.

It belongs to the endoribonuclease YbeY family. The cofactor is Zn(2+).

It is found in the cytoplasm. Single strand-specific metallo-endoribonuclease involved in late-stage 70S ribosome quality control and in maturation of the 3' terminus of the 16S rRNA. The chain is Endoribonuclease YbeY from Mycoplasmoides gallisepticum (strain R(low / passage 15 / clone 2)) (Mycoplasma gallisepticum).